A 227-amino-acid chain; its full sequence is Cytochrome c oxidase subunit 2 (227 aa).

Residues 1-26 (MATWSNLNLQNSSSPLMEQLIFFHDH) are Mitochondrial intermembrane-facing. A helical membrane pass occupies residues 27–48 (TLMILLMITVLVAYIMSMLFFN). At 49-62 (LYTNRFLLEGQTIE) the chain is on the mitochondrial matrix side. A helical membrane pass occupies residues 63–82 (IIWTILPAITLIFIALPSLR). Residues 83–227 (LLYLLDESMD…FINWIKNYSS (145 aa)) are Mitochondrial intermembrane-facing. The Cu cation site is built by H160, C195, E197, C199, H203, and M206. Residue E197 coordinates Mg(2+).

This sequence belongs to the cytochrome c oxidase subunit 2 family. In terms of assembly, component of the cytochrome c oxidase (complex IV, CIV), a multisubunit enzyme composed of a catalytic core of 3 subunits and several supernumerary subunits. The complex exists as a monomer or a dimer and forms supercomplexes (SCs) in the inner mitochondrial membrane with ubiquinol-cytochrome c oxidoreductase (cytochrome b-c1 complex, complex III, CIII). Cu cation serves as cofactor.

The protein resides in the mitochondrion inner membrane. The enzyme catalyses 4 Fe(II)-[cytochrome c] + O2 + 8 H(+)(in) = 4 Fe(III)-[cytochrome c] + 2 H2O + 4 H(+)(out). Its function is as follows. Component of the cytochrome c oxidase, the last enzyme in the mitochondrial electron transport chain which drives oxidative phosphorylation. The respiratory chain contains 3 multisubunit complexes succinate dehydrogenase (complex II, CII), ubiquinol-cytochrome c oxidoreductase (cytochrome b-c1 complex, complex III, CIII) and cytochrome c oxidase (complex IV, CIV), that cooperate to transfer electrons derived from NADH and succinate to molecular oxygen, creating an electrochemical gradient over the inner membrane that drives transmembrane transport and the ATP synthase. Cytochrome c oxidase is the component of the respiratory chain that catalyzes the reduction of oxygen to water. Electrons originating from reduced cytochrome c in the intermembrane space (IMS) are transferred via the dinuclear copper A center (CU(A)) of subunit 2 and heme A of subunit 1 to the active site in subunit 1, a binuclear center (BNC) formed by heme A3 and copper B (CU(B)). The BNC reduces molecular oxygen to 2 water molecules using 4 electrons from cytochrome c in the IMS and 4 protons from the mitochondrial matrix. This is Cytochrome c oxidase subunit 2 (COII) from Acheta domesticus (House cricket).